Consider the following 418-residue polypeptide: MNLKIAIIVICQLVYFTQGDTVPSKPLSVDYQAEFSWDLYKKLYPEFRRNMVISPYSLRKIFVCLHQLTDAKDPATTKFSKQLHKVFKFNPTGQLPDLVRRRYENQREAYAQDQGLNTTTLAVVLGRKKKTTHALNNLPKSCGIFARSLKSGSPKQMTRSLNAAMKNISNGAAQSFLSESDLNRDWDFFVADSWLFKGFWRYQFEEEYTTTCNFYTNAKKKGLMRFMYLEEMLRVGHFPQWNVRAVELPLHRESPFSCVLMMPVAADIEELIESLSHKRFKEIYDNMSASKTTVRLPQFRLRMKLSAKSMLEQLGFDTAFKESVFRVFEKDGAIPLGDAIQKMDLSMAHEGEDLAKTYVDRSLGQQFTAHQPFMFVIFDRKELVPIIVGNVVAAITPKDVGPQSDEKLCDNPPRFNGR.

The N-terminal stretch at Met-1 to Gly-19 is a signal peptide. Asn-117, Asn-167, and Asn-286 each carry an N-linked (GlcNAc...) asparagine glycan.

It belongs to the serpin family. As to quaternary structure, interacts with host coagulation factor X/F10 (activated). Female salivary gland (at protein level).

The protein resides in the secreted. Anticoagulant and antithrombotic serpin-type protein inhibiting host coagulation factor Xa (F10). Does not inhibit host uPA/urokinase-type plasminogen activator (PLAU), kallikrein, granzyme B (GZMB), matriptase, elastase, alpha-chymotrypsin, chymase, coagulation factor XIIa (F12), coagulation factor XIa (F11), plasmin (PLG), thrombin (F2), trypsin and cathepsin G (CTSG). Inhibits factor Xa-induced production of pro-inflammatory cytokines, such as MCP-1/CCL2, TNF-alpha/TNF, IL-1beta/IL1B, IL6, IL8/CXCL8 and IL18, in human endothelial cells. Inhibits factor Xa-induced up-regulation of protease-activated receptors (PARs) F2R, F2RL1 and F2RL2 in human endothelial cells. Prevents activation of host F2RL1 via inhibition of F2RL1 cleavage by host factor Xa. Inhibits factor Xa-induced up-regulation of adhesion molecules ICAM1 and VCAM1 in human endothelial cells. Inhibits factor Xa-induced up-regulation of phosphorylated ERK1/2 in human endothelial cells. Inhibits factor Xa-induced activation of transcription factor NF-kappa-B in human endothelial cells. Reduces factor Xa-induced edema in the host. Reduces factor Xa-induced endothelial permeability in the host. This Aedes albopictus (Asian tiger mosquito) protein is FXa-directed anticoagulant.